Here is a 336-residue protein sequence, read N- to C-terminus: Holliday junction branch migration complex subunit RuvB (336 aa).

A large ATPase domain (RuvB-L) region spans residues 4-184 (ADRLIQPQVQ…FGIPLRLEFY (181 aa)). Residues Arg24, Gly65, Lys68, Thr69, Thr70, 131-133 (EDY), Arg174, Tyr184, and Arg221 each bind ATP. Thr69 serves as a coordination point for Mg(2+). The interval 185–255 (NVADLTTIVT…VAEYALDLLD (71 aa)) is small ATPAse domain (RuvB-S). Residues 258-336 (DQGFDYLDRK…HFSLVRPEKA (79 aa)) are head domain (RuvB-H). The DNA site is built by Arg294, Arg313, and Arg318.

It belongs to the RuvB family. Homohexamer. Forms an RuvA(8)-RuvB(12)-Holliday junction (HJ) complex. HJ DNA is sandwiched between 2 RuvA tetramers; dsDNA enters through RuvA and exits via RuvB. An RuvB hexamer assembles on each DNA strand where it exits the tetramer. Each RuvB hexamer is contacted by two RuvA subunits (via domain III) on 2 adjacent RuvB subunits; this complex drives branch migration. In the full resolvosome a probable DNA-RuvA(4)-RuvB(12)-RuvC(2) complex forms which resolves the HJ.

The protein resides in the cytoplasm. The enzyme catalyses ATP + H2O = ADP + phosphate + H(+). In terms of biological role, the RuvA-RuvB-RuvC complex processes Holliday junction (HJ) DNA during genetic recombination and DNA repair, while the RuvA-RuvB complex plays an important role in the rescue of blocked DNA replication forks via replication fork reversal (RFR). RuvA specifically binds to HJ cruciform DNA, conferring on it an open structure. The RuvB hexamer acts as an ATP-dependent pump, pulling dsDNA into and through the RuvAB complex. RuvB forms 2 homohexamers on either side of HJ DNA bound by 1 or 2 RuvA tetramers; 4 subunits per hexamer contact DNA at a time. Coordinated motions by a converter formed by DNA-disengaged RuvB subunits stimulates ATP hydrolysis and nucleotide exchange. Immobilization of the converter enables RuvB to convert the ATP-contained energy into a lever motion, pulling 2 nucleotides of DNA out of the RuvA tetramer per ATP hydrolyzed, thus driving DNA branch migration. The RuvB motors rotate together with the DNA substrate, which together with the progressing nucleotide cycle form the mechanistic basis for DNA recombination by continuous HJ branch migration. Branch migration allows RuvC to scan DNA until it finds its consensus sequence, where it cleaves and resolves cruciform DNA. The polypeptide is Holliday junction branch migration complex subunit RuvB (Shewanella frigidimarina (strain NCIMB 400)).